The chain runs to 310 residues: MEKEILLLLLVIMFLTVADVDAVRVPFCATKSAKDSIFGLRDQTCSVSGVESDERPRFVAVTEGDERWLQIALDMIHKNKCDYVALLFYASWCPFSRSFRPSFDVISSLYSSIPHFAIKESSIKPSTLSKYGVHGFPTLLLLNSTMRARYRGTRMLDSLVAFYSDVTGIETLDKTSLERSVSVPHLGNENNTEPENCPFTWARSPENMLRQETYLALAIVFVLLRLLHLIYPTLVVFMKFTWRRIAQNMRLESLLEHTVGFLSRAVQLCMHRRSNLQGGAMNARAWASKSLATVSIGDSSSSNRRSSSSQ.

The signal sequence occupies residues Met-1–Ala-22. The Thioredoxin domain maps to Gly-49–Gly-168. Asn-143 and Asn-190 each carry an N-linked (GlcNAc...) asparagine glycan. The chain crosses the membrane as a helical span at residues Leu-217 to Phe-237.

The protein localises to the membrane. In Arabidopsis thaliana (Mouse-ear cress), this protein is 5'-adenylylsulfate reductase-like 4 (APRL4).